The chain runs to 245 residues: Ribosomal RNA small subunit methyltransferase G (245 aa).

S-adenosyl-L-methionine contacts are provided by residues Gly85, Phe90, 108–110, 136–137, and Arg155; these read DST and AE.

This sequence belongs to the methyltransferase superfamily. RNA methyltransferase RsmG family.

The protein resides in the cytoplasm. Its function is as follows. Specifically methylates the N7 position of a guanine in 16S rRNA. This Nostoc sp. (strain PCC 7120 / SAG 25.82 / UTEX 2576) protein is Ribosomal RNA small subunit methyltransferase G.